We begin with the raw amino-acid sequence, 890 residues long: Alanine--tRNA ligase (890 aa).

Zn(2+)-binding residues include His568, His572, Cys680, and His684.

Belongs to the class-II aminoacyl-tRNA synthetase family. The cofactor is Zn(2+).

The protein localises to the cytoplasm. It carries out the reaction tRNA(Ala) + L-alanine + ATP = L-alanyl-tRNA(Ala) + AMP + diphosphate. Functionally, catalyzes the attachment of alanine to tRNA(Ala) in a two-step reaction: alanine is first activated by ATP to form Ala-AMP and then transferred to the acceptor end of tRNA(Ala). Also edits incorrectly charged Ser-tRNA(Ala) and Gly-tRNA(Ala) via its editing domain. The protein is Alanine--tRNA ligase of Psychrobacter arcticus (strain DSM 17307 / VKM B-2377 / 273-4).